Reading from the N-terminus, the 232-residue chain is Acetate--CoA ligase [ADP-forming] I subunit beta (232 aa).

Positions 27 to 63 (KEILKLYGIPVPEFKVARNEEEAVKFSGEIGYPVVMK) constitute an ATP-grasp domain. 53 to 64 (SGEIGYPVVMKI) serves as a coordination point for ATP.

It belongs to the acetate CoA ligase beta subunit family. Heterotetramer of two alpha and two beta subunits.

It localises to the cytoplasm. The enzyme catalyses acetate + ATP + CoA = acetyl-CoA + ADP + phosphate. With respect to regulation, activity is dependent on magnesium. Catalyzes the reversible formation of acetate and ATP from acetyl-CoA by using ADP and phosphate. Can use other substrates such as isobutyryl-CoA, propionyl-CoA and butyryl-CoA, but not indoleacetyl-CoA, phenylacetyl-CoA or succinyl-CoA. Seems to be involved primarily in the conversion of acetyl-CoA to acetate. Participates in the degradation of branched-chain amino acids via branched-chain-acyl-CoA esters. This is Acetate--CoA ligase [ADP-forming] I subunit beta from Pyrococcus furiosus (strain ATCC 43587 / DSM 3638 / JCM 8422 / Vc1).